A 472-amino-acid polypeptide reads, in one-letter code: Methylenetetrahydrofolate--tRNA-(uracil-5-)-methyltransferase TrmFO (472 aa).

10 to 15 contributes to the FAD binding site; sequence GGGLAG.

It belongs to the MnmG family. TrmFO subfamily. It depends on FAD as a cofactor.

Its subcellular location is the cytoplasm. It carries out the reaction uridine(54) in tRNA + (6R)-5,10-methylene-5,6,7,8-tetrahydrofolate + NADH + H(+) = 5-methyluridine(54) in tRNA + (6S)-5,6,7,8-tetrahydrofolate + NAD(+). The enzyme catalyses uridine(54) in tRNA + (6R)-5,10-methylene-5,6,7,8-tetrahydrofolate + NADPH + H(+) = 5-methyluridine(54) in tRNA + (6S)-5,6,7,8-tetrahydrofolate + NADP(+). In terms of biological role, catalyzes the folate-dependent formation of 5-methyl-uridine at position 54 (M-5-U54) in all tRNAs. The protein is Methylenetetrahydrofolate--tRNA-(uracil-5-)-methyltransferase TrmFO of Mesorhizobium japonicum (strain LMG 29417 / CECT 9101 / MAFF 303099) (Mesorhizobium loti (strain MAFF 303099)).